The sequence spans 492 residues: Probable protein phosphatase 2C 33 (492 aa).

Residues 1–46 (MGSCLSAESRSPRPGSPCSPAFSVRKRKNSKKRPGSRNSSFDYRRE) are disordered. The span at 24–35 (VRKRKNSKKRPG) shows a compositional bias: basic residues. Residues 64-393 (VACIYTQQGK…DDCAAVCLYL (330 aa)) enclose the PPM-type phosphatase domain. Mn(2+) contacts are provided by aspartate 100, glycine 101, aspartate 338, and aspartate 384. The interval 406–468 (SISKLEDGEE…ADNLDSEPGT (63 aa)) is disordered. The segment covering 412–427 (DGEEEELKATTEDDDA) has biased composition (acidic residues). Residues 441–460 (SGKEIALDESETEKLIKEAD) show a composition bias toward basic and acidic residues.

This sequence belongs to the PP2C family. It depends on Mg(2+) as a cofactor. Mn(2+) serves as cofactor.

It carries out the reaction O-phospho-L-seryl-[protein] + H2O = L-seryl-[protein] + phosphate. The catalysed reaction is O-phospho-L-threonyl-[protein] + H2O = L-threonyl-[protein] + phosphate. This chain is Probable protein phosphatase 2C 33 (PPC6-1), found in Arabidopsis thaliana (Mouse-ear cress).